A 906-amino-acid chain; its full sequence is Protein translocase subunit SecA (906 aa).

Residues Gln89, 107 to 111, and Asp502 contribute to the ATP site; that span reads GEGKT. The tract at residues 829–898 is disordered; the sequence is EAPPEPELPP…ACPCGSGKKY (70 aa). Residues 858–877 show a composition bias toward basic and acidic residues; that stretch reads WSDHQHDERNVPAAERDPAD. Residues Cys890, Cys892, Cys901, and His902 each coordinate Zn(2+).

This sequence belongs to the SecA family. As to quaternary structure, monomer and homodimer. Part of the essential Sec protein translocation apparatus which comprises SecA, SecYEG and auxiliary proteins SecDF-YajC and YidC. It depends on Zn(2+) as a cofactor.

The protein resides in the cell inner membrane. The protein localises to the cytoplasm. The enzyme catalyses ATP + H2O + cellular proteinSide 1 = ADP + phosphate + cellular proteinSide 2.. Functionally, part of the Sec protein translocase complex. Interacts with the SecYEG preprotein conducting channel. Has a central role in coupling the hydrolysis of ATP to the transfer of proteins into and across the cell membrane, serving both as a receptor for the preprotein-SecB complex and as an ATP-driven molecular motor driving the stepwise translocation of polypeptide chains across the membrane. The protein is Protein translocase subunit SecA of Brucella anthropi (strain ATCC 49188 / DSM 6882 / CCUG 24695 / JCM 21032 / LMG 3331 / NBRC 15819 / NCTC 12168 / Alc 37) (Ochrobactrum anthropi).